A 428-amino-acid chain; its full sequence is Glutamate-1-semialdehyde 2,1-aminomutase (428 aa).

Lys-265 bears the N6-(pyridoxal phosphate)lysine mark.

It belongs to the class-III pyridoxal-phosphate-dependent aminotransferase family. HemL subfamily. As to quaternary structure, homodimer. Requires pyridoxal 5'-phosphate as cofactor.

The protein localises to the cytoplasm. It catalyses the reaction (S)-4-amino-5-oxopentanoate = 5-aminolevulinate. The protein operates within porphyrin-containing compound metabolism; protoporphyrin-IX biosynthesis; 5-aminolevulinate from L-glutamyl-tRNA(Glu): step 2/2. The protein is Glutamate-1-semialdehyde 2,1-aminomutase of Hamiltonella defensa subsp. Acyrthosiphon pisum (strain 5AT).